We begin with the raw amino-acid sequence, 372 residues long: Putative glutamate--cysteine ligase 2 (372 aa).

It belongs to the glutamate--cysteine ligase type 2 family. YbdK subfamily.

The catalysed reaction is L-cysteine + L-glutamate + ATP = gamma-L-glutamyl-L-cysteine + ADP + phosphate + H(+). In terms of biological role, ATP-dependent carboxylate-amine ligase which exhibits weak glutamate--cysteine ligase activity. The chain is Putative glutamate--cysteine ligase 2 from Rhodopirellula baltica (strain DSM 10527 / NCIMB 13988 / SH1).